A 454-amino-acid polypeptide reads, in one-letter code: Mogroside I-E synthase (454 aa).

Histidine 18 functions as the Proton acceptor in the catalytic mechanism. Histidine 18 lines the an anthocyanidin pocket. The active-site Charge relay is aspartate 111. Histidine 144 is an an anthocyanidin binding site. An intrachain disulfide couples cysteine 259 to cysteine 331. The UDP-alpha-D-glucose site is built by serine 278, cysteine 331, glutamine 333, tryptophan 351, asparagine 352, serine 353, and glutamate 356. Alanine 371 lines the an anthocyanidin pocket. The UDP-alpha-D-glucose site is built by aspartate 372 and glutamine 373.

Belongs to the UDP-glycosyltransferase family. Highly expressed in young fruits 15 days after anthesis (15-DAA).

It carries out the reaction mogrol + UDP-alpha-D-glucose = mogroside IE + UDP + H(+). The protein operates within secondary metabolite biosynthesis; terpenoid biosynthesis. Its activity is regulated as follows. Activity is increased by Mg(2+). UDP-glycosyltransferase involved in the biosynthesis of cucurbitacin and mogroside tetracyclic triterpene natural products (e.g. siamenoside I and mogrosides IV, V and VI). Cucurbitacins have cytotoxic properties and exhibit deterrent taste as a defense barrier against herbivores. Mogrosides are nonsugar highly oxygenated compounds used as high-intensity zero-calorie sweeteners; they also possess pharmacological properties such as regulating immunity, lowering blood sugar and lipid levels, protecting the liver, and acting as antioxidants and antitumor agents. Catalyzes the transfer of a glucose moiety to the C-3 hydroxyl of mogrol to form mogroside I-E. Besides mogrol, UGT74AC1 also shows activity in vitro with quercetin and naringenin as substrate. This chain is Mogroside I-E synthase, found in Siraitia grosvenorii (Monk's fruit).